Reading from the N-terminus, the 77-residue chain is Large ribosomal subunit protein uL24 (77 aa).

Belongs to the universal ribosomal protein uL24 family. Part of the 50S ribosomal subunit.

Functionally, one of two assembly initiator proteins, it binds directly to the 5'-end of the 23S rRNA, where it nucleates assembly of the 50S subunit. One of the proteins that surrounds the polypeptide exit tunnel on the outside of the subunit. The chain is Large ribosomal subunit protein uL24 from Sulfurovum sp. (strain NBC37-1).